We begin with the raw amino-acid sequence, 219 residues long: 7-cyano-7-deazaguanine synthase (219 aa).

10 to 20 (FSGGQDSTTCL) provides a ligand contact to ATP. Residues Cys-188, Cys-197, Cys-200, and Cys-203 each contribute to the Zn(2+) site.

It belongs to the QueC family. Homodimer. Zn(2+) serves as cofactor.

The enzyme catalyses 7-carboxy-7-deazaguanine + NH4(+) + ATP = 7-cyano-7-deazaguanine + ADP + phosphate + H2O + H(+). The protein operates within purine metabolism; 7-cyano-7-deazaguanine biosynthesis. Catalyzes the ATP-dependent conversion of 7-carboxy-7-deazaguanine (CDG) to 7-cyano-7-deazaguanine (preQ(0)). The sequence is that of 7-cyano-7-deazaguanine synthase from Clostridium botulinum (strain Loch Maree / Type A3).